A 183-amino-acid chain; its full sequence is Nucleoside triphosphate pyrophosphatase (183 aa).

The active-site Proton acceptor is the Asp71.

It belongs to the Maf family. A divalent metal cation is required as a cofactor.

Its subcellular location is the cytoplasm. The catalysed reaction is a ribonucleoside 5'-triphosphate + H2O = a ribonucleoside 5'-phosphate + diphosphate + H(+). The enzyme catalyses a 2'-deoxyribonucleoside 5'-triphosphate + H2O = a 2'-deoxyribonucleoside 5'-phosphate + diphosphate + H(+). In terms of biological role, nucleoside triphosphate pyrophosphatase. May have a dual role in cell division arrest and in preventing the incorporation of modified nucleotides into cellular nucleic acids. This chain is Nucleoside triphosphate pyrophosphatase, found in Campylobacter jejuni subsp. jejuni serotype O:2 (strain ATCC 700819 / NCTC 11168).